The sequence spans 467 residues: Protein CitXG (467 aa).

Residues Met1–Ser178 are apo-citrate lyase phosphoribosyl-dephospho-CoA transferase. The 2-(5''-triphosphoribosyl)-3'-dephosphocoenzyme-A synthase stretch occupies residues Lys179–Leu467.

In the N-terminal section; belongs to the CitX family. It in the C-terminal section; belongs to the CitG/MdcB family.

It carries out the reaction apo-[citrate lyase ACP] + 2'-(5''-triphospho-alpha-D-ribosyl)-3'-dephospho-CoA = holo-[citrate lyase ACP] + diphosphate. The enzyme catalyses 3'-dephospho-CoA + ATP = 2'-(5''-triphospho-alpha-D-ribosyl)-3'-dephospho-CoA + adenine. Functionally, bifunctional enzyme that catalyzes formation of 2-(5''-triphosphoribosyl)-3'-dephosphocoenzyme-A, and then the transfer of this prosthetic group precursor to the apo-acyl carrier protein (gamma chain) of the citrate lyase to yield the holo-acyl carrier protein. The protein is Protein CitXG (citXG) of Leuconostoc mesenteroides subsp. cremoris.